The following is a 152-amino-acid chain: Small ribosomal subunit protein uS17A (152 aa).

It belongs to the universal ribosomal protein uS17 family. In terms of assembly, component of the small ribosomal subunit (SSU). Mature yeast ribosomes consist of a small (40S) and a large (60S) subunit. The 40S small subunit contains 1 molecule of ribosomal RNA (18S rRNA) and at least 33 different proteins. The large 60S subunit contains 3 rRNA molecules (25S, 5.8S and 5S rRNA) and at least 46 different proteins.

Its subcellular location is the cytoplasm. It localises to the nucleus. Functionally, component of the ribosome, a large ribonucleoprotein complex responsible for the synthesis of proteins in the cell. The small ribosomal subunit (SSU) binds messenger RNAs (mRNAs) and translates the encoded message by selecting cognate aminoacyl-transfer RNA (tRNA) molecules. The large subunit (LSU) contains the ribosomal catalytic site termed the peptidyl transferase center (PTC), which catalyzes the formation of peptide bonds, thereby polymerizing the amino acids delivered by tRNAs into a polypeptide chain. The nascent polypeptides leave the ribosome through a tunnel in the LSU and interact with protein factors that function in enzymatic processing, targeting, and the membrane insertion of nascent chains at the exit of the ribosomal tunnel. The chain is Small ribosomal subunit protein uS17A (rps1101) from Schizosaccharomyces pombe (strain 972 / ATCC 24843) (Fission yeast).